A 778-amino-acid chain; its full sequence is MSSGSKEGGGGSPAYHLPHPHPHPPQHAQYVGPYRLEKTLGKGQTGLVKLGVHCITGQKVAVKIVNREKLSESVLMKVEREIAILKLIEHPHVLKLHDVYENKKYLYLVLEHVSGGELFDYLVKKGRLTPKEARKFFRQIVSALDFCHSYSICHRDLKPENLLLDEKNNIRIADFGMASLQVGDSLLETSCGSPHYACPEVIKGEKYDGRRADMWSCGVILFALLVGALPFDDDNLRQLLEKVKRGVFHMPHFIPPDCQSLLRGMIEVEPEKRLSLEQIQKHPWYLGGKHEPDPCLEPAPGRRVAMRSLPSNGELDPDVLESMASLGCFRDRERLHRELRSEEENQEKMIYYLLLDRKERYPSCEDQDLPPRNDVDPPRKRVDSPMLSRHGKRRPERKSMEVLSITDAGSGGSPVPTRRALEMAQHSQRSRSVSGASTGLSSSPLSSPRSPVFSFSPEPGVGDEARGGGSPTSKTQTLPSRGPRGGGAGEQPPPPSARSTPLPGPPGSPRSSGGTPLHSPLHTPRASPTGTPGTTPPPSPGGGVGGAAWRSRLNSIRNSFLGSPRFHRRKMQVPTAEEMSSLTPESSPELAKRSWFGNFISLDKEEQIFLVLKDKPLSSIKADIVHAFLSIPSLSHSVLSQTSFRAEYKASGGPSVFQKPVRFQVDISSSEGPEPSPRRDGSSGGGIYSVTFTLISGPSRRFKRVVETIQAQLLSTHDQPSVQALADEKNGAQTRPAGTPPRSLQPPPGRPDPDLSSSPRRGPSKDKKLLATNGTPLP.

The span at 1–12 (MSSGSKEGGGGS) shows a compositional bias: gly residues. The disordered stretch occupies residues 1 to 29 (MSSGSKEGGGGSPAYHLPHPHPHPPQHAQ). A Protein kinase domain is found at 34–285 (YRLEKTLGKG…LEQIQKHPWY (252 aa)). ATP-binding positions include 40 to 48 (LGKGQTGLV) and lysine 63. Aspartate 156 serves as the catalytic Proton acceptor. A Phosphothreonine; by LKB1 modification is found at threonine 189. Serine 193 carries the phosphoserine modification. A UBA domain is found at 314-356 (ELDPDVLESMASLGCFRDRERLHRELRSEEENQEKMIYYLLLD). Over residues 362–383 (PSCEDQDLPPRNDVDPPRKRVD) the composition is skewed to basic and acidic residues. A disordered region spans residues 362–548 (PSCEDQDLPP…SPGGGVGGAA (187 aa)). Phosphoserine occurs at positions 399, 443, 447, and 450. The span at 430–457 (SRSVSGASTGLSSSPLSSPRSPVFSFSP) shows a compositional bias: low complexity. 4 positions are modified to omega-N-methylarginine: arginine 466, arginine 481, arginine 484, and arginine 498. The segment covering 491–508 (QPPPPSARSTPLPGPPGS) has biased composition (pro residues). The residue at position 508 (serine 508) is a Phosphoserine. A compositionally biased stretch (low complexity) spans 509–533 (PRSSGGTPLHSPLHTPRASPTGTPG). Position 525 is an omega-N-methylarginine (arginine 525). Phosphothreonine is present on residues threonine 529 and threonine 535. The residue at position 550 (arginine 550) is an Omega-N-methylarginine. Threonine 583 is subject to Phosphothreonine. Residues serine 586, serine 587, and serine 601 each carry the phosphoserine modification. Positions 719-778 (QPSVQALADEKNGAQTRPAGTPPRSLQPPPGRPDPDLSSSPRRGPSKDKKLLATNGTPLP) are disordered.

It belongs to the protein kinase superfamily. CAMK Ser/Thr protein kinase family. SNF1 subfamily. It depends on Mg(2+) as a cofactor. In terms of processing, phosphorylated at Thr-189 by STK11/LKB1 in complex with STE20-related adapter-alpha (STRADA) pseudo kinase and CAB39. Not phosphorylated at Thr-189 by CaMKK2. In contrast, it is phosphorylated and activated by CaMKK1. May be inactivated via dephosphorylation of Thr-189 by PP2C. May be autophosphorylated. As to expression, mainly present in brain. Present in presynaptic nerve terminals (at protein level).

It localises to the cytoplasm. The protein resides in the nucleus. It is found in the cytoskeleton. The protein localises to the microtubule organizing center. Its subcellular location is the centrosome. It localises to the synapse. The protein resides in the presynaptic active zone. It is found in the cytoplasmic vesicle. The protein localises to the secretory vesicle. Its subcellular location is the synaptic vesicle. It carries out the reaction L-seryl-[protein] + ATP = O-phospho-L-seryl-[protein] + ADP + H(+). The enzyme catalyses L-threonyl-[protein] + ATP = O-phospho-L-threonyl-[protein] + ADP + H(+). It catalyses the reaction L-seryl-[tau protein] + ATP = O-phospho-L-seryl-[tau protein] + ADP + H(+). The catalysed reaction is L-threonyl-[tau protein] + ATP = O-phospho-L-threonyl-[tau protein] + ADP + H(+). With respect to regulation, activated by phosphorylation on Thr-189 by STK11/LKB1. Serine/threonine-protein kinase that plays a key role in polarization of neurons and centrosome duplication. Phosphorylates CDC25B, CDC25C, MAPT/TAU, RIMS1, TUBG1, TUBG2 and WEE1. Following phosphorylation and activation by STK11/LKB1, acts as a key regulator of polarization of cortical neurons, probably by mediating phosphorylation of microtubule-associated proteins such as MAPT/TAU at 'Thr-523' and 'Ser-573'. Also regulates neuron polarization by mediating phosphorylation of WEE1 at 'Ser-642' in postmitotic neurons, leading to down-regulate WEE1 activity in polarized neurons. Also acts as a positive regulator of centrosome duplication by mediating phosphorylation of gamma-tubulin (TUBG1 and TUBG2) at 'Ser-131', leading to translocation of gamma-tubulin and its associated proteins to the centrosome. Involved in the UV-induced DNA damage checkpoint response, probably by inhibiting CDK1 activity through phosphorylation and activation of WEE1, and inhibition of CDC25B and CDC25C. In neurons, localizes to synaptic vesicles and plays a role in neurotransmitter release, possibly by phosphorylating RIMS1. The sequence is that of Serine/threonine-protein kinase BRSK1 (Brsk1) from Rattus norvegicus (Rat).